Consider the following 158-residue polypeptide: Proteinase inhibitor type-2 (158 aa).

The first 24 residues, 1-24 (MAIHKEVSFLAYLLVLGMLLFVSA), serve as a signal peptide directing secretion. A run of 2 repeats spans residues 29–86 (DAKA…HPKN) and 87–146 (PKAC…IEPK). 8 disulfide bridges follow: Cys33–Cys121, Cys37–Cys117, Cys45–Cys127, Cys57–Cys94, Cys60–Cys78, Cys61–Cys90, Cys67–Cys103, and Cys120–Cys138.

This sequence belongs to the protease inhibitor I20 (potato type II proteinase inhibitor) family.

This Solanum tuberosum (Potato) protein is Proteinase inhibitor type-2.